Consider the following 587-residue polypeptide: MNHKLKPTVGLGYCLLCAALCLLLLRDVAIAGSGEEPSGVREARSVGTQVAVQPVDCVQSEWSSWTRCDVCRKKRYRYAKLVQPSQFGGEPCHVQGKEVEPCSPPSRYDCTHDETPLCEGFLCTYTGRCVPIDLRCNGDDDCGDWSAEKGSPKVPKACKQEAQEYHGIENLAKGINILHSHLEGSVIDNRYYAGSCLPHYIQDVRFRKPYNLQQYTLETKGTYDFKLQSFESYSEFVHYTMTERSSKTTVSIGFALPGVAEFGFNYADSKYSKSEKKIRRASRKENSFVQAKAELQLARYILKSEDLMLHPEFFLRLRALPQSYNYGEYRQIYRDYGTHYITEATLGGDYEYTVILDKEKLEKTGYSLEAYKNCEQIVLKVGANIKGVYVTVGLEGGGCDGLLNEMGEDTVKGSMVEDYVAVVSGGDSESITWLAAKNLPTPPLMRLWGEAVHYNLDFIRSVTRPLYELVTARDFSSANSLKKNLRRALAEYLEESSSCRCAPCRNNGLAVLKGTRCECVCPSGYSGLGCEITQRPDIGIDGSWSCWGSWSPCRGRSKTRSRQCNNPAPSSGGIACRGLQMETTDCF.

The first 31 residues, 1 to 31, serve as a signal peptide directing secretion; it reads MNHKLKPTVGLGYCLLCAALCLLLLRDVAIA. Residues 32-44 constitute a propeptide that is removed on maturation; the sequence is GSGEEPSGVREAR. A TSP type-1 1 domain is found at 56-111; that stretch reads DCVQSEWSSWTRCDVCRKKRYRYAKLVQPSQFGGEPCHVQGKEVEPCSPPSRYDCT. Cystine bridges form between cysteine 57–cysteine 92, cysteine 68–cysteine 102, cysteine 71–cysteine 110, cysteine 118–cysteine 129, and cysteine 123–cysteine 142. 2 C-linked (Man) tryptophan glycosylation sites follow: tryptophan 62 and tryptophan 65. The 43-residue stretch at 117 to 159 folds into the LDL-receptor class A domain; sequence LCEGFLCTYTGRCVPIDLRCNGDDDCGDWSAEKGSPKVPKACK. Residues leucine 134, asparagine 137, aspartate 139, aspartate 141, and glutamate 148 each coordinate Ca(2+). One can recognise an MACPF domain in the interval 154-500; sequence VPKACKQEAQ…EYLEESSSCR (347 aa). A disulfide bridge connects residues cysteine 158 and cysteine 196. The next 4 beta stranded transmembrane spans lie at 248–255, 258–265, 375–382, and 388–395; these read TTVSIGFA, GVAEFGFN, EQIVLKVG, and VYVTVGLE. Cystine bridges form between cysteine 374/cysteine 399, cysteine 499/cysteine 546, cysteine 501/cysteine 517, cysteine 504/cysteine 519, and cysteine 521/cysteine 530. The EGF-like domain maps to 501–531; that stretch reads CAPCRNNGLAVLKGTRCECVCPSGYSGLGCE. The region spanning 541–587 is the TSP type-1 2 domain; sequence DGSWSCWGSWSPCRGRSKTRSRQCNNPAPSSGGIACRGLQMETTDCF. C-linked (Man) tryptophan glycosylation is found at tryptophan 547 and tryptophan 550. Cysteines 553 and 586 form a disulfide.

Belongs to the complement C6/C7/C8/C9 family. In terms of assembly, heterotrimer of 3 chains: alpha (C8A), beta (C8B) and gamma (C8G); the alpha and gamma chains are disulfide bonded. Component of the membrane attack complex (MAC), composed of complement C5b, C6, C7, C8A, C8B, C8G and multiple copies of the pore-forming subunit C9.

Its subcellular location is the secreted. It is found in the target cell membrane. Component of the membrane attack complex (MAC), a multiprotein complex activated by the complement cascade, which inserts into a target cell membrane and forms a pore, leading to target cell membrane rupture and cell lysis. The MAC is initiated by proteolytic cleavage of C5 into complement C5b in response to the classical, alternative, lectin and GZMK complement pathways. The complement pathways consist in a cascade of proteins that leads to phagocytosis and breakdown of pathogens and signaling that strengthens the adaptive immune system. C8B, together with C8A and C8G, inserts into the target membrane, but does not form pores by itself. During MAC assembly, associates with C5b, C6 and C7 to form the C5b8 intermediate complex that inserts into the target membrane and traverses the bilayer increasing membrane rigidity. The protein is Complement component C8 beta chain (c8b) of Oncorhynchus mykiss (Rainbow trout).